The sequence spans 464 residues: MDYDFKVKLSSERERVEDLFEYEGCKVGRGTYGHVYKAKRKDGKDDKDYALKQIEGTGISMSACREIALLRELKHPNVISLLKVFLSHADRKVWLLFDYAEHDLWHIIKFHRASKANKKPVQLPRGMVKSLLYQILDGIHYLHANWVLHRDLKPANILVMGEGPERGRVKIADMGFARLFNSPLKPLADLDPVVVTFWYRAPELLLGARHYTKAIDIWAIGCIFAELLTSEPIFHCRQEDIKTSNPYHHDQLDRIFNVMGFPADKDWEDIKKMPEHSTLMKDFRRNTYTNCSLIKYMEKHKVKPDSKAFHLLQKLLTMDPIKRITSEQAMQDPYFLEDPLPTSDVFAGCQIPYPKREFLTEEEPDEKGDKKTQQQQQGNNHTNGTGHPGNQDSGHAQGPPLKKVRVVPPTTTSGGLIMTSDYQRSNPHAAYPNPGPSTSQPQSSMGYSATSQQPPQYSHQTHRY.

Residues M1 to R15 form an interaction with CCNC region. Positions E21–F335 constitute a Protein kinase domain. Residues V27–V35 and K52 each bind ATP. Catalysis depends on D151, which acts as the Proton acceptor. Residues F358 to Y464 form a disordered region. Low complexity predominate over residues Q373 to Q391. Composition is skewed to polar residues over residues P409 to N426 and P436 to Y464.

Belongs to the protein kinase superfamily. CMGC Ser/Thr protein kinase family. CDC2/CDKX subfamily. Component of the Mediator complex, which is composed of MED1, MED4, MED6, MED7, MED8, MED9, MED10, MED11, MED12, MED13, MED13L, MED14, MED15, MED16, MED17, MED18, MED19, MED20, MED21, MED22, MED23, MED24, MED25, MED26, MED27, MED29, MED30, MED31, CCNC, CDK8 and CDC2L6/CDK11. The MED12, MED13, CCNC and CDK8 subunits form a distinct module termed the CDK8 module. Mediator containing the CDK8 module is less active than Mediator lacking this module in supporting transcriptional activation. Individual preparations of the Mediator complex lacking one or more distinct subunits have been variously termed ARC, CRSP, DRIP, PC2, SMCC and TRAP. The cylin/CDK pair formed by CCNC/CDK8 also associates with the large subunit of RNA polymerase II. Interacts with CTNNB1, GLI3 and MAML1. Requires Mg(2+) as cofactor.

It localises to the nucleus. The catalysed reaction is L-seryl-[protein] + ATP = O-phospho-L-seryl-[protein] + ADP + H(+). It carries out the reaction L-threonyl-[protein] + ATP = O-phospho-L-threonyl-[protein] + ADP + H(+). It catalyses the reaction [DNA-directed RNA polymerase] + ATP = phospho-[DNA-directed RNA polymerase] + ADP + H(+). In terms of biological role, component of the Mediator complex, a coactivator involved in regulated gene transcription of nearly all RNA polymerase II-dependent genes. Mediator functions as a bridge to convey information from gene-specific regulatory proteins to the basal RNA polymerase II transcription machinery. Mediator is recruited to promoters by direct interactions with regulatory proteins and serves as a scaffold for the assembly of a functional pre-initiation complex with RNA polymerase II and the general transcription factors. Phosphorylates the CTD (C-terminal domain) of the large subunit of RNA polymerase II (RNAp II), which may inhibit the formation of a transcription initiation complex. Phosphorylates CCNH leading to down-regulation of the TFIIH complex and transcriptional repression. Recruited through interaction with MAML1 to hyperphosphorylate the intracellular domain of NOTCH, leading to its degradation. In Mus musculus (Mouse), this protein is Cyclin-dependent kinase 8 (Cdk8).